Reading from the N-terminus, the 394-residue chain is Ceramide glucosyltransferase (394 aa).

Topologically, residues 1-10 (MALLDLAQEG) are lumenal. A helical transmembrane segment spans residues 11–32 (MALFGFVLFVVLWLMHFMSIIY). Residues 33-195 (TRLHLNKKAT…QVYFGTSHPR (163 aa)) are Cytoplasmic-facing. Residue Asp92 is a short sequence motif, D1. Position 117 is an N6-acetyllysine (Lys117). A short sequence motif (D2) is located at residue Asp144. A helical transmembrane segment spans residues 196-215 (SYISANVTGFKCVTGMSCLM). Topologically, residues 216 to 287 (RKDVLDQAGG…KLRINMLPAT (72 aa)) are lumenal. A short sequence motif (D3) is located at residue Asp236. Catalysis depends on Asp236, which acts as the Proton acceptor. The short motif at 272 to 276 (RMIRW) is the (Q/R)XXRW element. A helical membrane pass occupies residues 288–304 (IICEPISECFVASLIIG). Topologically, residues 305 to 309 (WAAHH) are cytoplasmic. A helical membrane pass occupies residues 310–328 (VFRWDIMVFFMCHCLAWFI). The Lumenal portion of the chain corresponds to 329 to 348 (FDYIQLRGVQGGTLCFSKLD). The helical transmembrane segment at 349-369 (YAVAWFIRESMTIYIFLSALW) threads the bilayer. The Cytoplasmic segment spans residues 370 to 394 (DPTISWRTGRYRLRCGGTAEEILDV).

It belongs to the glycosyltransferase 2 family. As to quaternary structure, interacts with RTN1; regulates the ceramide glucosyltransferase activity of UGCG.

It is found in the golgi apparatus membrane. It carries out the reaction an N-acylsphing-4-enine + UDP-alpha-D-glucose = a beta-D-glucosyl-(1&lt;-&gt;1')-N-acylsphing-4-enine + UDP + H(+). It catalyses the reaction UDP-alpha-D-xylose + an N-acylsphing-4-enine = a beta-D-xylosyl-(1&lt;-&gt;1')-N-acylsphing-4-enine + UDP + H(+). The catalysed reaction is N-(9Z-octadecenoyl)-sphing-4-enine + UDP-alpha-D-xylose = beta-D-xylosyl-(1&lt;-&gt;1')-N-(9Z-octadecenoyl)-sphing-4-enine + UDP + H(+). Its pathway is lipid metabolism; sphingolipid metabolism. Functionally, participates in the initial step of the glucosylceramide-based glycosphingolipid/GSL synthetic pathway at the cytosolic surface of the Golgi. Catalyzes the transfer of glucose from UDP-glucose to ceramide to produce glucosylceramide/GlcCer (such as beta-D-glucosyl-(1&lt;-&gt;1')-N-acylsphing-4-enine). Glucosylceramide is the core component of glycosphingolipids/GSLs, amphipathic molecules consisting of a ceramide lipid moiety embedded in the outer leaflet of the membrane, linked to one of hundreds of different externally oriented oligosaccharide structures. Glycosphingolipids are essential components of membrane microdomains that mediate membrane trafficking and signal transduction. They are implicated in many fundamental cellular processes, including growth, differentiation, migration, morphogenesis, cell-to-cell and cell-to-matrix interactions. They are required for instance in the proper development and functioning of the nervous system. As an example of their role in signal transduction, they regulate the leptin receptor/LEPR in the leptin-mediated signaling pathway. They also play an important role in the establishment of the skin barrier regulating keratinocyte differentiation and the proper assembly of the cornified envelope. The biosynthesis of GSLs is also required for the proper intestinal endocytic uptake of nutritional lipids. Catalyzes the synthesis of xylosylceramide/XylCer (such as beta-D-xylosyl-(1&lt;-&gt;1')-N-acylsphing-4-enine) using UDP-Xyl as xylose donor. This chain is Ceramide glucosyltransferase, found in Mus musculus (Mouse).